The sequence spans 374 residues: Probable neutral protease 2 homolog ARB_00849 (374 aa).

The N-terminal stretch at 1-19 is a signal peptide; the sequence is MKFLTALSAIGALVATATA. Residues 20–189 constitute a propeptide that is removed on maturation; sequence AAVPNTPAKQ…KKSRGTIDKR (170 aa). Intrachain disulfides connect Cys197-Cys268 and Cys275-Cys293. Zn(2+) is bound at residue His318. Glu319 is a catalytic residue. Zn(2+)-binding residues include His322 and Asp333.

It belongs to the peptidase M35 family. Zn(2+) is required as a cofactor.

It localises to the secreted. It carries out the reaction Preferential cleavage of bonds with hydrophobic residues in P1'. Also 3-Asn-|-Gln-4 and 8-Gly-|-Ser-9 bonds in insulin B chain.. Its function is as follows. Probable secreted metalloprotease that shows high activities on basic nuclear substrates such as histone and protamine. May be involved in virulence. The sequence is that of Probable neutral protease 2 homolog ARB_00849 from Arthroderma benhamiae (strain ATCC MYA-4681 / CBS 112371) (Trichophyton mentagrophytes).